The primary structure comprises 383 residues: Probable aspartate/prephenate aminotransferase (383 aa).

Residues Gly-39, Trp-125, and Asn-175 each coordinate L-aspartate. N6-(pyridoxal phosphate)lysine is present on Lys-234. Arg-361 is a binding site for L-aspartate.

It belongs to the class-I pyridoxal-phosphate-dependent aminotransferase family. Homodimer. It depends on pyridoxal 5'-phosphate as a cofactor.

The protein localises to the cytoplasm. It carries out the reaction L-aspartate + 2-oxoglutarate = oxaloacetate + L-glutamate. The catalysed reaction is L-arogenate + oxaloacetate = prephenate + L-aspartate. Catalyzes the reversible conversion of aspartate and 2-oxoglutarate to glutamate and oxaloacetate. Can also transaminate prephenate in the presence of aspartate. In Thermus aquaticus, this protein is Probable aspartate/prephenate aminotransferase (aspC).